A 332-amino-acid polypeptide reads, in one-letter code: MEAEEGHQRDRLCDYCDSSVALVYCKADSAKLCLACDKQVHVANQLFAKHFRSLLCDSCNESPSSLFCETERSVLCQNCDWQHHTASSSLHSRRPFEGFTGCPSVPELLAIVGLDDLTLDSGLLWESPEIVSLNDLIVSGGSGTHNFRATDVPPLPKNRHATCGKYKDEMIRQLRGLSRSEPGCLKFETPDAEIDAGFQFLAPDLFSTCELESGLKWFDQQDHEDFPYCSLLKNLSESDEKPENVDRESSVMVPVSGCLNRCEEETVMVPVITSTRSMTHEINSLERNSALSRYKEKKKSRRYEKHIRYESRKVRAESRTRIRGRFAKAADP.

Zn(2+) contacts are provided by Cys13, Cys16, Cys36, His41, Cys56, Cys59, Cys79, and His84. The B box-type 1; atypical zinc finger occupies 13-55 (CDYCDSSVALVYCKADSAKLCLACDKQVHVANQLFAKHFRSLL). Residues 56-96 (CDSCNESPSSLFCETERSVLCQNCDWQHHTASSSLHSRRPF) form a B box-type 2; atypical zinc finger. One can recognise a CCT domain in the interval 287–329 (RNSALSRYKEKKKSRRYEKHIRYESRKVRAESRTRIRGRFAKA).

Belongs to the CONSTANS family.

It localises to the nucleus. This Arabidopsis thaliana (Mouse-ear cress) protein is Zinc finger protein CONSTANS-LIKE 13 (COL13).